Here is a 514-residue protein sequence, read N- to C-terminus: 2,3-bisphosphoglycerate-independent phosphoglycerate mutase (514 aa).

Mn(2+) contacts are provided by D13 and S63. S63 (phosphoserine intermediate) is an active-site residue. Residues H124, 154 to 155 (RD), R186, R192, 258 to 261 (RADR), and K332 contribute to the substrate site. The Mn(2+) site is built by D399, H403, D440, H441, and H459.

It belongs to the BPG-independent phosphoglycerate mutase family. In terms of assembly, monomer. Requires Mn(2+) as cofactor.

The catalysed reaction is (2R)-2-phosphoglycerate = (2R)-3-phosphoglycerate. It participates in carbohydrate degradation; glycolysis; pyruvate from D-glyceraldehyde 3-phosphate: step 3/5. Functionally, catalyzes the interconversion of 2-phosphoglycerate and 3-phosphoglycerate. The chain is 2,3-bisphosphoglycerate-independent phosphoglycerate mutase from Legionella pneumophila (strain Paris).